Consider the following 163-residue polypeptide: MVAAPDRLITLAVVTGAHGITGEVRLKPFTEDAAQFKAYGIFSANGTPLTLKKLRPDPKGWVARFSEITDRNQAEALRGTALTVPRKALPDLPADEYYYIDLIGLPCVDPSGQSIGVSVAVENYGAGDILEIEKADEKRFMVPIAQAVDVHDDHLVIAADFIE.

In terms of domain architecture, PRC barrel spans 94–162 (ADEYYYIDLI…DHLVIAADFI (69 aa)).

This sequence belongs to the RimM family. As to quaternary structure, binds ribosomal protein uS19.

The protein localises to the cytoplasm. An accessory protein needed during the final step in the assembly of 30S ribosomal subunit, possibly for assembly of the head region. Essential for efficient processing of 16S rRNA. May be needed both before and after RbfA during the maturation of 16S rRNA. It has affinity for free ribosomal 30S subunits but not for 70S ribosomes. This chain is Ribosome maturation factor RimM, found in Zymomonas mobilis subsp. mobilis (strain ATCC 31821 / ZM4 / CP4).